Reading from the N-terminus, the 290-residue chain is 3-deoxy-manno-octulosonate cytidylyltransferase, mitochondrial (290 aa).

The N-terminal 50 residues, 1–50, are a transit peptide targeting the mitochondrion; the sequence is MSVCSSSSSSQKTWIVNGILAGTAIAAAIGARAYLGRSKKFRSRVVGIIP.

This sequence belongs to the KdsB family. Mg(2+) is required as a cofactor. As to expression, expressed in roots, leaves, stems and siliques.

Its subcellular location is the mitochondrion outer membrane. The enzyme catalyses 3-deoxy-alpha-D-manno-oct-2-ulosonate + CTP = CMP-3-deoxy-beta-D-manno-octulosonate + diphosphate. It functions in the pathway nucleotide-sugar biosynthesis; CMP-3-deoxy-D-manno-octulosonate biosynthesis; CMP-3-deoxy-D-manno-octulosonate from 3-deoxy-D-manno-octulosonate and CTP: step 1/1. With respect to regulation, inhibited by 2beta-deoxy-Kdo. Its function is as follows. Catalyzes the production of the sugar nucleotide CMP-3-deoxy-D-manno-octulosonate (CMP-KDO). CTP is the preferred nucleotide donor, but it can partially be replaced with UTP. Activates KDO during the biosynthesis of rhamnogalacturonan II (RG-II), a structurally complex pectic polysaccharide of the primary cell wall. RG-II is essential for the cell wall integrity of rapidly growing tissues and pollen tube growth and elongation. This chain is 3-deoxy-manno-octulosonate cytidylyltransferase, mitochondrial, found in Arabidopsis thaliana (Mouse-ear cress).